The following is a 727-amino-acid chain: Sodium-dependent neutral amino acid transporter SLC6A17 (727 aa).

Over 1 to 69 (MPKNSKVTQR…RPAWNSKLQY (69 aa)) the chain is Cytoplasmic. 2 positions are modified to phosphoserine: Ser13 and Ser20. Residues 70 to 90 (ILAQIGFSVGLGNIWRFPYLC) traverse the membrane as a helical segment. At 91 to 95 (QKNGG) the chain is on the extracellular side. A helical transmembrane segment spans residues 96-116 (GAYLVPYLVLLIIIGIPLFFL). Residues 117 to 147 (ELAVGQRIRRGSIGVWHYICPRLGGIGFSSC) are Cytoplasmic-facing. The helical transmembrane segment at 148-168 (IVCLFVGLYYNVIIGWSIFYF) threads the bilayer. Residues 169-222 (FKSFQYPLPWSECPVVRNGSVAVVEAECEKSSATTYFWYREALDISDSISESGG) lie on the Extracellular side of the membrane. Residue Asn186 is glycosylated (N-linked (GlcNAc...) asparagine). The chain crosses the membrane as a helical span at residues 223 to 243 (LNWKMTLCLLVAWSIVGMAVV). The Cytoplasmic portion of the chain corresponds to 244-253 (KGIQSSGKVM). Residues 254–274 (YFSSLFPYVVLACFLVRGLLL) traverse the membrane as a helical segment. Residues 275–300 (RGAVDGILHMFTPKLDKMLDPQVWRE) lie on the Extracellular side of the membrane. The helical transmembrane segment at 301 to 321 (AATQVFFALGLGFGGVIAFSS) threads the bilayer. Topologically, residues 322-334 (YNKQDNNCHFDAA) are cytoplasmic. A helical transmembrane segment spans residues 335–355 (LVSFINFFTSVLATLVVFAVL). Over 356 to 460 (GFKANIMNEK…HFPASPFWSV (105 aa)) the chain is Extracellular. Residue Tyr377 is modified to Phosphotyrosine. Residue Asn393 is glycosylated (N-linked (GlcNAc...) asparagine). A helical transmembrane segment spans residues 461-481 (MFFLMLINLGLGSMIGTMAGI). The Cytoplasmic portion of the chain corresponds to 482–490 (TTPIIDTFK). A helical transmembrane segment spans residues 491 to 511 (VPKEMFTVGCCVFAFLVGLLF). Topologically, residues 512–527 (VQRSGNYFVTMFDDYS) are extracellular. A helical transmembrane segment spans residues 528-548 (ATLPLTLIVILENIAVAWIYG). The Cytoplasmic portion of the chain corresponds to 549–573 (TKKFMQELTEMLGFRPYRFYFYMWK). A helical membrane pass occupies residues 574–594 (FVSPLCMAVLTTASIIQLGVT). Over 595-617 (PPGYSAWIKEEAAERYLYFPNWA) the chain is Extracellular. Residues 618-638 (MALLITLIVVATLPIPVVFVL) traverse the membrane as a helical segment. Over 639–727 (RHFHLLSDGS…LLASTPESEL (89 aa)) the chain is Cytoplasmic. Residues Ser665 and Ser701 each carry the phosphoserine modification. Positions 680–727 (VPSEAPSPMPTHRSYLGPGSTSPLETSGNPNGRYGSGYLLASTPESEL) are disordered. A compositionally biased stretch (polar residues) spans 698 to 709 (GSTSPLETSGNP).

Belongs to the sodium:neurotransmitter symporter (SNF) (TC 2.A.22) family.

Its subcellular location is the cytoplasmic vesicle. It localises to the secretory vesicle. The protein resides in the synaptic vesicle membrane. It is found in the postsynapse. The protein localises to the presynapse. The catalysed reaction is L-proline(in) + Na(+)(in) = L-proline(out) + Na(+)(out). It carries out the reaction L-leucine(in) + Na(+)(in) = L-leucine(out) + Na(+)(out). It catalyses the reaction glycine(in) + Na(+)(in) = glycine(out) + Na(+)(out). The enzyme catalyses L-alanine(in) + Na(+)(in) = L-alanine(out) + Na(+)(out). The catalysed reaction is L-glutamine(in) + Na(+)(in) = L-glutamine(out) + Na(+)(out). Functionally, synaptic vesicle transporter with apparent selectivity for neutral amino acids. The transport is sodium-coupled but chloride-independent, likely driven by the proton electrochemical gradient generated by vacuolar H(+)-ATPase in an overall electrogenic mechanism. May contribute to the synaptic uptake of neurotransmitter precursors in a process coupled in part to vesicle exocytosis. This chain is Sodium-dependent neutral amino acid transporter SLC6A17, found in Homo sapiens (Human).